Consider the following 334-residue polypeptide: Holliday junction branch migration complex subunit RuvB (334 aa).

The large ATPase domain (RuvB-L) stretch occupies residues 4–184 (ADRLISAAVI…FGIVQRLEFY (181 aa)). ATP-binding positions include Ile-23, Arg-24, Gly-65, Lys-68, Thr-69, Thr-70, 131–133 (EDY), Arg-174, Tyr-184, and Arg-221. Thr-69 provides a ligand contact to Mg(2+). Positions 185–255 (PVADLEHIVS…VAMKALDMLN (71 aa)) are small ATPAse domain (RuvB-S). Positions 258–334 (AEGFDFMDRK…YKHFGITREE (77 aa)) are head domain (RuvB-H). 3 residues coordinate DNA: Arg-294, Arg-313, and Arg-318.

Belongs to the RuvB family. Homohexamer. Forms an RuvA(8)-RuvB(12)-Holliday junction (HJ) complex. HJ DNA is sandwiched between 2 RuvA tetramers; dsDNA enters through RuvA and exits via RuvB. An RuvB hexamer assembles on each DNA strand where it exits the tetramer. Each RuvB hexamer is contacted by two RuvA subunits (via domain III) on 2 adjacent RuvB subunits; this complex drives branch migration. In the full resolvosome a probable DNA-RuvA(4)-RuvB(12)-RuvC(2) complex forms which resolves the HJ.

It localises to the cytoplasm. It catalyses the reaction ATP + H2O = ADP + phosphate + H(+). The RuvA-RuvB-RuvC complex processes Holliday junction (HJ) DNA during genetic recombination and DNA repair, while the RuvA-RuvB complex plays an important role in the rescue of blocked DNA replication forks via replication fork reversal (RFR). RuvA specifically binds to HJ cruciform DNA, conferring on it an open structure. The RuvB hexamer acts as an ATP-dependent pump, pulling dsDNA into and through the RuvAB complex. RuvB forms 2 homohexamers on either side of HJ DNA bound by 1 or 2 RuvA tetramers; 4 subunits per hexamer contact DNA at a time. Coordinated motions by a converter formed by DNA-disengaged RuvB subunits stimulates ATP hydrolysis and nucleotide exchange. Immobilization of the converter enables RuvB to convert the ATP-contained energy into a lever motion, pulling 2 nucleotides of DNA out of the RuvA tetramer per ATP hydrolyzed, thus driving DNA branch migration. The RuvB motors rotate together with the DNA substrate, which together with the progressing nucleotide cycle form the mechanistic basis for DNA recombination by continuous HJ branch migration. Branch migration allows RuvC to scan DNA until it finds its consensus sequence, where it cleaves and resolves cruciform DNA. The polypeptide is Holliday junction branch migration complex subunit RuvB (Yersinia pestis bv. Antiqua (strain Angola)).